We begin with the raw amino-acid sequence, 286 residues long: N-alpha-acetyltransferase 80 (286 aa).

The segment at 33 to 54 (TFNPGPTELTLDPEHQPEETPA) is disordered. The region spanning 60–207 (LTLEPVHRRP…VFTSRRLPAT (148 aa)) is the N-acetyltransferase domain. Substrate is bound by residues R85 and 90-93 (RLHS). Acetyl-CoA is bound by residues 141-143 (VVV), 149-154 (GRGFGR), and Q179. A disordered region spans residues 212–269 (FPTAPSPRPPRKAPNLTAQAAPRGPKGPPLPPPPPLPECLTISPPVPSGPPSKSLLET). The span at 236–248 (PKGPPLPPPPPLP) shows a compositional bias: pro residues.

This sequence belongs to the acetyltransferase family. In terms of tissue distribution, strongly expressed in heart and skeletal muscle, followed by brain and pancreas, with weak expression in kidney, liver, and lung and no expression in placenta.

The protein resides in the cytoplasm. Its subcellular location is the cytosol. It catalyses the reaction N-terminal L-aspartyl-L-aspartyl-L-aspartyl-[protein] + acetyl-CoA = N-terminal N-acetyl-L-aspartyl-L-aspartyl-L-aspartyl-[protein] + CoA + H(+). The enzyme catalyses N-terminal L-glutamyl-L-glutamyl-L-glutamyl-[protein] + acetyl-CoA = N-terminal N-acetyl-L-glutamyl-L-glutamyl-L-glutamyl-[protein] + CoA + H(+). Its function is as follows. N-alpha-acetyltransferase that specifically mediates the acetylation of the acidic amino terminus of processed forms of beta- and gamma-actin (ACTB and ACTG, respectively). N-terminal acetylation of processed beta- and gamma-actin regulates actin filament depolymerization and elongation. In vivo, preferentially displays N-terminal acetyltransferase activity towards acid N-terminal sequences starting with Asp-Asp-Asp and Glu-Glu-Glu. In vitro, shows high activity towards Met-Asp-Glu-Leu and Met-Asp-Asp-Asp. May act as a tumor suppressor. This chain is N-alpha-acetyltransferase 80, found in Homo sapiens (Human).